A 448-amino-acid polypeptide reads, in one-letter code: Protein chibby homolog 2 (448 aa).

A phosphoserine mark is found at Ser41, Ser86, Ser89, Ser97, Ser124, Ser144, Ser148, and Ser150. Residues 164–198 (KECMLQEENKSLREENKALREENRMLSKENKILQV) adopt a coiled-coil conformation. A phosphoserine mark is found at Ser212 and Ser225. Residues 242–267 (KEDSTLQLLREENRALQQLLEQKQAY) are a coiled coil. Positions 270–323 (QAEDTAAPAEESKPAPSPHEEPCSPGLLQDQGSGLSSRFEEPKGPPARQEDSKE) are disordered. 2 stretches are compositionally biased toward basic and acidic residues: residues 279–291 (EESKPAPSPHEEP) and 307–323 (RFEEPKGPPARQEDSKE). Residues Ser335 and Ser338 each carry the phosphoserine modification. Residues 356-414 (LQLLREMRQALQALLKENRLLQEENRTLQVLRAEHRGFQEENKALWENNKLKLQQKLVI) are a coiled coil.

It belongs to the chibby family. SPERT subfamily. As to quaternary structure, homodimer. Binds to NEK1. In terms of tissue distribution, testis-specific.

This Homo sapiens (Human) protein is Protein chibby homolog 2.